The sequence spans 120 residues: Large ribosomal subunit protein uL18 (120 aa).

It belongs to the universal ribosomal protein uL18 family. Part of the 50S ribosomal subunit; part of the 5S rRNA/L5/L18/L25 subcomplex. Contacts the 5S and 23S rRNAs.

Functionally, this is one of the proteins that bind and probably mediate the attachment of the 5S RNA into the large ribosomal subunit, where it forms part of the central protuberance. This chain is Large ribosomal subunit protein uL18, found in Exiguobacterium sp. (strain ATCC BAA-1283 / AT1b).